The chain runs to 348 residues: MTAPSQVLKIRRPDDWHVHLRDGDMLKTVVPYTSEIYGRAIVMPNLASPITTVDAAIAYRQRILDAVPAGHDFTPLMTCYLTDSLDADELERGFHEGVFTAAKLYPANATTNSSHGVTSVDAIMPVLERMEKLGMPLLVHGEVTHADVDIFDREARFIDTVMEPLRQRLTTLKVVFEHITTKDAAQYVRDGNDYLAATITPQHLMFNRNDMLVGGIRPHLYCLPILKRNIHQQALRELVASGFTRAFLGTDSAPHSRHRKETSCGCAGCFNAPSALGSYAAVFEEMNALAHFEAFCSLNGPQFYGLPVNTGWVELVRDEQQVPENIALADDSLVPFLAGETVRWSVKK.

2 residues coordinate Zn(2+): His-17 and His-19. Substrate-binding positions include His-19–Arg-21 and Asn-45. Residues Lys-103, His-140, and His-178 each contribute to the Zn(2+) site. Lys-103 carries the post-translational modification N6-carboxylysine. Position 140 (His-140) interacts with substrate. Leu-223 contributes to the substrate binding site. Asp-251 contributes to the Zn(2+) binding site. The active site involves Asp-251. Positions 255 and 267 each coordinate substrate.

It belongs to the metallo-dependent hydrolases superfamily. DHOase family. Class II DHOase subfamily. In terms of assembly, homodimer. Requires Zn(2+) as cofactor.

The catalysed reaction is (S)-dihydroorotate + H2O = N-carbamoyl-L-aspartate + H(+). Its pathway is pyrimidine metabolism; UMP biosynthesis via de novo pathway; (S)-dihydroorotate from bicarbonate: step 3/3. Catalyzes the reversible cyclization of carbamoyl aspartate to dihydroorotate. In Salmonella paratyphi C (strain RKS4594), this protein is Dihydroorotase.